The primary structure comprises 436 residues: 3-phosphoshikimate 1-carboxyvinyltransferase (436 aa).

The 3-phosphoshikimate site is built by Lys22, Ser23, and Arg27. Phosphoenolpyruvate is bound at residue Lys22. 2 residues coordinate phosphoenolpyruvate: Gly95 and Arg123. 3-phosphoshikimate contacts are provided by Ser170, Ser171, Gln172, Ser201, Asp322, and Lys349. Residue Gln172 participates in phosphoenolpyruvate binding. The active-site Proton acceptor is Asp322. The phosphoenolpyruvate site is built by Arg353, Arg397, and Lys422.

Belongs to the EPSP synthase family. Monomer.

Its subcellular location is the cytoplasm. It carries out the reaction 3-phosphoshikimate + phosphoenolpyruvate = 5-O-(1-carboxyvinyl)-3-phosphoshikimate + phosphate. It participates in metabolic intermediate biosynthesis; chorismate biosynthesis; chorismate from D-erythrose 4-phosphate and phosphoenolpyruvate: step 6/7. In terms of biological role, catalyzes the transfer of the enolpyruvyl moiety of phosphoenolpyruvate (PEP) to the 5-hydroxyl of shikimate-3-phosphate (S3P) to produce enolpyruvyl shikimate-3-phosphate and inorganic phosphate. This is 3-phosphoshikimate 1-carboxyvinyltransferase from Ralstonia nicotianae (strain ATCC BAA-1114 / GMI1000) (Ralstonia solanacearum).